The primary structure comprises 767 residues: Cullin-1 (767 aa).

One can recognise a Cullin neddylation domain in the interval 699 to 760 (DRKLLLQSAI…EKEYLERQGR (62 aa)). A Glycyl lysine isopeptide (Lys-Gly) (interchain with G-Cter in NEDD8) cross-link involves residue K713.

The protein belongs to the cullin family. Component of multiple Cul1-RING E3 ubiquitin-protein ligase complexes commonly known as SCF (SKP1-CUL1-F-box) complexes, consisting of cul1, skp1, pip1 and a variable F-box domain-containing protein as substrate-specific subunit. Binds to the pop1 homodimer, the pop2 homodimer and the pop1/pop2 heterodimer forming the SCF(pop1-pop2) complex. Interacts with pof3, pof14 and skp1. Neddylated; enhancing the ubiquitin-ligase activity.

It localises to the cytoplasm. The protein operates within protein modification; protein ubiquitination. Its function is as follows. Core component of multiple cullin-RING-based SCF (SKP1-CUL1-F-box protein) E3 ubiquitin-protein ligase complexes, which mediate the ubiquitination of target proteins. The functional specificity of the SCF complex depends on the F-box protein as substrate recognition component. SCF(pop1-pop2) is required for the maintenance of ploidy and directs ubiquitination of cig2. This is Cullin-1 (cul1) from Schizosaccharomyces pombe (strain 972 / ATCC 24843) (Fission yeast).